Here is a 257-residue protein sequence, read N- to C-terminus: Zinc import ATP-binding protein ZnuC (257 aa).

The region spanning 5–220 (ITLKNVAVNF…PEFIAMFGHH (216 aa)) is the ABC transporter domain. An ATP-binding site is contributed by 37–44 (GPNGAGKS).

This sequence belongs to the ABC transporter superfamily. Zinc importer (TC 3.A.1.15.5) family. The complex is composed of two ATP-binding proteins (ZnuC), two transmembrane proteins (ZnuB) and a solute-binding protein (ZnuA).

It localises to the cell inner membrane. The enzyme catalyses Zn(2+)(out) + ATP(in) + H2O(in) = Zn(2+)(in) + ADP(in) + phosphate(in) + H(+)(in). In terms of biological role, part of the ABC transporter complex ZnuABC involved in zinc import. Responsible for energy coupling to the transport system. The protein is Zinc import ATP-binding protein ZnuC of Photorhabdus laumondii subsp. laumondii (strain DSM 15139 / CIP 105565 / TT01) (Photorhabdus luminescens subsp. laumondii).